A 709-amino-acid polypeptide reads, in one-letter code: MSKTFAEIAETFLEPEAVRIAKEAVEEYGDHERKIIQIGIHFQVCCMFCDEYLSTNGSDRFVLIEGRKRGTAVSLQNELCKSYDLEPLPFLCDIFDREEKQFVEIGITRKADDSYFQSKFGKLGNSCKIFVFSYDGRLDKNCEGPMEEQKLRIFSFLATAADFLRKENMFNEIFLPDNEETIIEMKKGKTFLKLRDESVPLPFQTYEQMKDYCEKFKGNPRELASKVSQMQSNIKLPIKHYEQNKFRQIRLPKGPMAPYTHKFLMEEAWMFTKISDPERSRAGEILIDFFKKGNLSAIRPKDKPLQGKYPIHYKNLWNQIKAAIADRTMVISENDHSEFLGGIGRASKKIPEVSLTQDVITTEGLKQSENKLPEPRSFPKWFNAEWMWAIKDSDLTGWVPMAEYPPADNELEDYAEHLNKTMEGVLQGTNCAREMGKCILTVGALMTECRLFPGKIKVVPIYARSKERKSMQEGLPVPSEMDCLFGICVKSKSHLNKDDGMYTIITFEFSIREPNLEKHQKYTVFEAGHTTVRMKKGESVIGREVPLYLYCRTTALSKIKNDWLSKARRCFITTMDTVETICLRESAKAEENLVEKTLNEKQMWIGKKNGELIAQPLREALRVQLVQQFYFCIYNDSQLEGFCNEQKKILMALEGDKKNKSSFGFNPEGLLEKIEECLINNPMCLFMAQRLNELVIEASKRGAKFFKID.

Residues His41, Glu65, Asp93, Glu104, and Ile105 each coordinate Mn(2+). Residues 109–124 carry the Nuclear localization signal 1 (NLS1) motif; the sequence is RKADDSYFQSKFGKLG. The Nuclear localization signal 2 (NLS2) motif lies at 166 to 228; sequence KENMFNEIFL…NPRELASKVS (63 aa).

The protein belongs to the influenza viruses PA family. As to quaternary structure, influenza RNA polymerase is composed of three subunits: PB1, PB2 and PA. Interacts (via C-terminus) with PB1 (via N-terminus). Requires Mn(2+) as cofactor. In terms of processing, phosphorylated on serines and threonines by host kinases, including human casein kinase II.

Its subcellular location is the host cytoplasm. The protein resides in the host nucleus. Functionally, plays an essential role in viral RNA transcription and replication by forming the heterotrimeric polymerase complex together with PB1 and PB2 subunits. The complex transcribes viral mRNAs by using a unique mechanism called cap-snatching. It consists in the hijacking and cleavage of host capped pre-mRNAs. These short capped RNAs are then used as primers for viral mRNAs. The PB2 subunit is responsible for the binding of the 5' cap of cellular pre-mRNAs which are subsequently cleaved after 10-13 nucleotides by the PA subunit that carries the endonuclease activity. This chain is Polymerase acidic protein, found in Influenza C virus (strain C/JJ/1950).